The following is a 448-amino-acid chain: Phosphoglucosamine mutase (448 aa).

The active-site Phosphoserine intermediate is the serine 108. Residues serine 108, aspartate 247, aspartate 249, and aspartate 251 each coordinate Mg(2+). Serine 108 bears the Phosphoserine mark.

The protein belongs to the phosphohexose mutase family. Requires Mg(2+) as cofactor. Activated by phosphorylation.

The catalysed reaction is alpha-D-glucosamine 1-phosphate = D-glucosamine 6-phosphate. In terms of biological role, catalyzes the conversion of glucosamine-6-phosphate to glucosamine-1-phosphate. This Herminiimonas arsenicoxydans protein is Phosphoglucosamine mutase.